A 223-amino-acid polypeptide reads, in one-letter code: Ribose-5-phosphate isomerase A (223 aa).

Substrate-binding positions include T29 to T32, D82 to D85, and K95 to G98. E104 functions as the Proton acceptor in the catalytic mechanism. K122 provides a ligand contact to substrate.

Belongs to the ribose 5-phosphate isomerase family. In terms of assembly, homodimer.

The catalysed reaction is aldehydo-D-ribose 5-phosphate = D-ribulose 5-phosphate. It functions in the pathway carbohydrate degradation; pentose phosphate pathway; D-ribose 5-phosphate from D-ribulose 5-phosphate (non-oxidative stage): step 1/1. In terms of biological role, catalyzes the reversible conversion of ribose-5-phosphate to ribulose 5-phosphate. In Neisseria gonorrhoeae (strain ATCC 700825 / FA 1090), this protein is Ribose-5-phosphate isomerase A.